We begin with the raw amino-acid sequence, 159 residues long: MDPAEMRYLEEEDGPLMKTIKGSITGFGAGTIYGTILATWKDVPRVERNVALPGLIRTLKMMGTHGLTFAAIGGVYIGVEQLVQNFRSKRDFYNGAIGGFVAGASVLGYRARSIPTAIAAGATLAVTSALIDSGGQTTRVDNGREYYPYTVEKRAEADS.

Met-1 carries the post-translational modification N-acetylmethionine. Residues 1–65 (MDPAEMRYLE…IRTLKMMGTH (65 aa)) form a contains beta strands region. The next 3 helical transmembrane spans lie at 24 to 40 (ITGFGAGTIYGTILATW), 62 to 79 (MGTHGLTFAAIGGVYIGV), and 92 to 109 (FYNGAIGGFVAGASVLGY).

It belongs to the Tim17/Tim22/Tim23 family. Plastid outer envelope porin OEP16 (TC 1.B.30) subfamily. In terms of assembly, homodimer and oligomers in membrane. Part of both the NADH-ubiquinone oxidoreductase complex I and of the TIM17:23 complex. Interacts with TIM23-2.

The protein resides in the plastid. Its subcellular location is the chloroplast outer membrane. It localises to the mitochondrion outer membrane. The protein localises to the mitochondrion inner membrane. In terms of biological role, voltage-dependent high-conductance channel with a slight cation-selectivity; selective for amino acids but excludes triosephosphates or uncharged sugars. Non-essential amino acid-selective channel protein and translocation pore for NADPH:protochlorophyllide oxidoreductase A (PORA) and possibly PORB. This chain is Outer envelope pore protein 16-3, chloroplastic/mitochondrial (OEP163), found in Arabidopsis thaliana (Mouse-ear cress).